Reading from the N-terminus, the 236-residue chain is Phosphoribosylaminoimidazole-succinocarboxamide synthase (236 aa).

This sequence belongs to the SAICAR synthetase family.

The catalysed reaction is 5-amino-1-(5-phospho-D-ribosyl)imidazole-4-carboxylate + L-aspartate + ATP = (2S)-2-[5-amino-1-(5-phospho-beta-D-ribosyl)imidazole-4-carboxamido]succinate + ADP + phosphate + 2 H(+). Its pathway is purine metabolism; IMP biosynthesis via de novo pathway; 5-amino-1-(5-phospho-D-ribosyl)imidazole-4-carboxamide from 5-amino-1-(5-phospho-D-ribosyl)imidazole-4-carboxylate: step 1/2. The chain is Phosphoribosylaminoimidazole-succinocarboxamide synthase from Rickettsia bellii (strain OSU 85-389).